A 356-amino-acid chain; its full sequence is MSTTTDILPDVHTMRDTLQRLAPGTPLRDGLDRIVRGHTGALIVLGDEENVTSICDGGFEFDVTFAATRLRELCKMDGAVVLSSDGERIKRANVQLIPSPSWPTQESGTRHRSAERTALQTGVPVIAVSESQNTITLYVEGKSHILEEPSTLLNRANQALGTMERYRDRLDQVNTRLHMAELHNYATVIDVVSVIQREEMLRRVGETIDTNVLELGREAKQIQIQLTELRGDNDRERGYIIADYLVTDGIPTDETITEALEAVSGLDDKSLMKPSNIARILGLPPTEEALDEPVVPRGYRTLNRVPRVQKFLMDKLVGEFGNLHALTSASVEEISAVDGVGSLWARHITDGLARLT.

In terms of domain architecture, DAC spans Val11–Pro149. ATP is bound by residues Gly78, Leu96, and Thr109–Ser113.

This sequence belongs to the DisA family. Homooctamer. It depends on Mg(2+) as a cofactor.

The catalysed reaction is 2 ATP = 3',3'-c-di-AMP + 2 diphosphate. In terms of biological role, participates in a DNA-damage check-point. DisA forms globular foci that rapidly scan along the chromosomes searching for lesions. Its function is as follows. Also has diadenylate cyclase activity, catalyzing the condensation of 2 ATP molecules into cyclic di-AMP (c-di-AMP). c-di-AMP likely acts as a signaling molecule that may couple DNA integrity with a cellular process. The polypeptide is DNA integrity scanning protein DisA (Corynebacterium efficiens (strain DSM 44549 / YS-314 / AJ 12310 / JCM 11189 / NBRC 100395)).